A 143-amino-acid polypeptide reads, in one-letter code: Adrenodoxin, mitochondrial (143 aa).

Residues 1–19 (CSAVAVRTLRPLSLSARAA) constitute a mitochondrion transit peptide. One can recognise a 2Fe-2S ferredoxin-type domain in the interval 26–130 (ITVHFINRDG…NMTVRVPEAV (105 aa)). 4 residues coordinate [2Fe-2S] cluster: Cys-65, Cys-71, Cys-74, and Cys-111.

The protein belongs to the adrenodoxin/putidaredoxin family. [2Fe-2S] cluster is required as a cofactor.

The protein resides in the mitochondrion matrix. Functionally, essential for the synthesis of various steroid hormones. Participates in the reduction of mitochondrial cytochrome P450 for steroidogenesis. Transfers electrons from adrenodoxin reductase to CYP11A1, a cytochrome P450 that catalyzes cholesterol side-chain cleavage. Does not form a ternary complex with adrenodoxin reductase and CYP11A1 but shuttles between the two enzymes to transfer electrons. The protein is Adrenodoxin, mitochondrial (FDX1) of Gallus gallus (Chicken).